Reading from the N-terminus, the 599-residue chain is UvrABC system protein C (599 aa).

Positions 15–93 (EKPGCYQYFD…IKEYQPRYNV (79 aa)) constitute a GIY-YIG domain. One can recognise a UVR domain in the interval 207–242 (HRLVRMYRDRMQVYSEGLRFEEAQICKERIELLERY).

This sequence belongs to the UvrC family. As to quaternary structure, interacts with UvrB in an incision complex.

It localises to the cytoplasm. Its function is as follows. The UvrABC repair system catalyzes the recognition and processing of DNA lesions. UvrC both incises the 5' and 3' sides of the lesion. The N-terminal half is responsible for the 3' incision and the C-terminal half is responsible for the 5' incision. This Porphyromonas gingivalis (strain ATCC BAA-308 / W83) protein is UvrABC system protein C.